Reading from the N-terminus, the 163-residue chain is Lipoprotein signal peptidase (163 aa).

Transmembrane regions (helical) follow at residues alanine 9 to leucine 29, isoleucine 42 to glycine 62, tryptophan 67 to leucine 87, and serine 93 to isoleucine 113. Residues aspartate 123 and aspartate 141 contribute to the active site. A helical transmembrane segment spans residues phenylalanine 137–leucine 157.

This sequence belongs to the peptidase A8 family.

It localises to the cell inner membrane. It carries out the reaction Release of signal peptides from bacterial membrane prolipoproteins. Hydrolyzes -Xaa-Yaa-Zaa-|-(S,diacylglyceryl)Cys-, in which Xaa is hydrophobic (preferably Leu), and Yaa (Ala or Ser) and Zaa (Gly or Ala) have small, neutral side chains.. It participates in protein modification; lipoprotein biosynthesis (signal peptide cleavage). Functionally, this protein specifically catalyzes the removal of signal peptides from prolipoproteins. This chain is Lipoprotein signal peptidase, found in Coxiella burnetii (strain RSA 331 / Henzerling II).